We begin with the raw amino-acid sequence, 398 residues long: Cysteine desulfurase 2 (398 aa).

Residues 71 to 72 (GT), Asn150, Gln178, and 198 to 200 (SGH) each bind pyridoxal 5'-phosphate. Lys201 is modified (N6-(pyridoxal phosphate)lysine). Thr236 lines the pyridoxal 5'-phosphate pocket. The active-site Cysteine persulfide intermediate is the Cys323. Cys323 contacts [2Fe-2S] cluster.

The protein belongs to the class-V pyridoxal-phosphate-dependent aminotransferase family. NifS/IscS subfamily. Homodimer. The cofactor is pyridoxal 5'-phosphate.

The enzyme catalyses (sulfur carrier)-H + L-cysteine = (sulfur carrier)-SH + L-alanine. Catalyzes the removal of elemental sulfur atoms from cysteine to produce alanine. Seems to participate in the biosynthesis of the nitrogenase metalloclusters by providing the inorganic sulfur required for the Fe-S core formation. This Trichormus variabilis (strain ATCC 29413 / PCC 7937) (Anabaena variabilis) protein is Cysteine desulfurase 2.